The sequence spans 24 residues: Transaldolase (24 aa).

The protein belongs to the transaldolase family.

It is found in the cytoplasm. It catalyses the reaction D-sedoheptulose 7-phosphate + D-glyceraldehyde 3-phosphate = D-erythrose 4-phosphate + beta-D-fructose 6-phosphate. It participates in carbohydrate degradation; pentose phosphate pathway; D-glyceraldehyde 3-phosphate and beta-D-fructose 6-phosphate from D-ribose 5-phosphate and D-xylulose 5-phosphate (non-oxidative stage): step 2/3. Its function is as follows. Transaldolase is important for the balance of metabolites in the pentose-phosphate pathway. The sequence is that of Transaldolase from Capsicum annuum var. annuum (Red pepper).